A 295-amino-acid chain; its full sequence is Trimeric intracellular cation channel type A (295 aa).

The Lumenal segment spans residues 1 to 18; the sequence is MELLSALSLGELALSFSR. A helical transmembrane segment spans residues 19–39; sequence VPLFPVFDLSYFIVSILYLKY. Topologically, residues 40–51 are cytoplasmic; sequence EPGAVELSRRHP. The chain crosses the membrane as a helical span at residues 52–72; sequence VASWLCAMLHCFGSYILADLL. Residues 73–85 are Lumenal-facing; that stretch reads LGEPLIDYFSNNS. A Ca(2+)-binding site is contributed by glycine 74. A helical transmembrane segment spans residues 86 to 106; the sequence is SILLASAVWYLIFFCPLDLFY. Over 107–144 the chain is Cytoplasmic; that stretch reads KCVCFLPVKLIFVAMKEVVRVRKIAVGIHHAHHHYHHG. A 1,2-diacyl-sn-glycero-3-phospho-(1D-myo-inositol-4,5-bisphosphate) contacts are provided by lysine 122 and arginine 126. Residues 145–165 traverse the membrane as a helical segment; the sequence is WFIMIATGWVKGSGVALLSNV. The Lumenal portion of the chain corresponds to 166-178; that stretch reads EQLLRGVWKPETN. The helical transmembrane segment at 179–199 threads the bilayer; that stretch reads EILHMSFPTKASLYGAILFTL. At 200 to 209 the chain is on the cytoplasmic side; the sequence is QQTRWLPVSK. The helical transmembrane segment at 210–230 threads the bilayer; the sequence is ASLIFIFTMFMVSCKVFLTAT. The Lumenal portion of the chain corresponds to 231–234; it reads HSHS. Residues 235–255 form a helical membrane-spanning segment; it reads SPFDVLEAYVCPVLFGTGSGG. Over 256–295 the chain is Cytoplasmic; it reads DHPQDNHGAWPGGPPSGALATKSKEELSEGSRKKKTKKAD. Residues 256–295 are disordered; that stretch reads DHPQDNHGAWPGGPPSGALATKSKEELSEGSRKKKTKKAD. Positions 277-286 are enriched in basic and acidic residues; the sequence is KSKEELSEGS.

The protein belongs to the TMEM38 family. Homotrimer; conformation seems to be controled by binding to diacylglycerol (DAG).

The protein localises to the sarcoplasmic reticulum membrane. It is found in the nucleus membrane. The catalysed reaction is K(+)(in) = K(+)(out). With respect to regulation, channel activity is activated by a change of voltage within the sarcoplasmic reticulum lumen and blocked by luminal high Ca(2+) levels. Intracellular monovalent cation channel required for maintenance of rapid intracellular calcium release. Acts as a potassium counter-ion channel that functions in synchronization with calcium release from intracellular stores. Opened by a change of voltage within the sarcoplasmic reticulum lumen. The protein is Trimeric intracellular cation channel type A of Oryctolagus cuniculus (Rabbit).